The chain runs to 471 residues: Glutamate--tRNA ligase (471 aa).

Residues 9–19 carry the 'HIGH' region motif; sequence PSPTGFLHVGG. Zn(2+) is bound by residues C98, C100, C125, and D127. Positions 237 to 241 match the 'KMSKS' region motif; sequence KLSKR. K240 is an ATP binding site.

This sequence belongs to the class-I aminoacyl-tRNA synthetase family. Glutamate--tRNA ligase type 1 subfamily. Monomer. Zn(2+) is required as a cofactor.

It localises to the cytoplasm. It catalyses the reaction tRNA(Glu) + L-glutamate + ATP = L-glutamyl-tRNA(Glu) + AMP + diphosphate. Its function is as follows. Catalyzes the attachment of glutamate to tRNA(Glu) in a two-step reaction: glutamate is first activated by ATP to form Glu-AMP and then transferred to the acceptor end of tRNA(Glu). This is Glutamate--tRNA ligase from Aeromonas salmonicida (strain A449).